Reading from the N-terminus, the 497-residue chain is Guanosine-5'-triphosphate,3'-diphosphate pyrophosphatase (497 aa).

The protein belongs to the GppA/Ppx family. GppA subfamily.

The catalysed reaction is guanosine 3'-diphosphate 5'-triphosphate + H2O = guanosine 3',5'-bis(diphosphate) + phosphate + H(+). Its pathway is purine metabolism; ppGpp biosynthesis; ppGpp from GTP: step 2/2. Its function is as follows. Catalyzes the conversion of pppGpp to ppGpp. Guanosine pentaphosphate (pppGpp) is a cytoplasmic signaling molecule which together with ppGpp controls the 'stringent response', an adaptive process that allows bacteria to respond to amino acid starvation, resulting in the coordinated regulation of numerous cellular activities. The polypeptide is Guanosine-5'-triphosphate,3'-diphosphate pyrophosphatase (Vibrio parahaemolyticus serotype O3:K6 (strain RIMD 2210633)).